We begin with the raw amino-acid sequence, 99 residues long: Integration host factor subunit alpha (99 aa).

Belongs to the bacterial histone-like protein family. In terms of assembly, heterodimer of an alpha and a beta chain.

Its function is as follows. This protein is one of the two subunits of integration host factor, a specific DNA-binding protein that functions in genetic recombination as well as in transcriptional and translational control. The polypeptide is Integration host factor subunit alpha (Xylella fastidiosa (strain M12)).